The chain runs to 359 residues: Tropomodulin-1 (359 aa).

The segment at 36-61 (ELDPDNALLPAGLRQKDQTTKAPTGP) is disordered. A tropomyosin-binding region spans residues 39-138 (PDNALLPAGL…CDIAAILGMH (100 aa)).

This sequence belongs to the tropomodulin family. Binds to the N-terminus of tropomyosin and to actin. Interacts with FLII. In terms of tissue distribution, highly expressed in the erythrocyte, heart and skeletal muscle.

The protein localises to the cytoplasm. It is found in the cytoskeleton. Functionally, blocks the elongation and depolymerization of the actin filaments at the pointed end. The Tmod/TM complex contributes to the formation of the short actin protofilament, which in turn defines the geometry of the membrane skeleton. This chain is Tropomodulin-1 (Tmod1), found in Mus musculus (Mouse).